Here is a 556-residue protein sequence, read N- to C-terminus: Vetispiradiene synthase 1 (556 aa).

The Mg(2+) site is built by Asp-309, Asp-313, Asp-452, Thr-456, and Glu-460. The DDXXD motif motif lies at 309-313 (DDTFD).

It belongs to the terpene synthase family. Tpsa subfamily. Mg(2+) is required as a cofactor.

The protein resides in the cytoplasm. It catalyses the reaction (2E,6E)-farnesyl diphosphate = (-)-vetispiradiene + diphosphate. It participates in secondary metabolite biosynthesis; terpenoid biosynthesis. Its function is as follows. Sesquiterpene synthase that catalyzes the formation of vetispiradiene from trans,trans-farnesyl diphosphate. The initial internal cyclization produces the monocyclic intermediate germacrene A. This Solanum tuberosum (Potato) protein is Vetispiradiene synthase 1 (PVS1).